The chain runs to 126 residues: UPF0102 protein PMT_0624 (126 aa).

This sequence belongs to the UPF0102 family.

The polypeptide is UPF0102 protein PMT_0624 (Prochlorococcus marinus (strain MIT 9313)).